A 64-amino-acid chain; its full sequence is DNA-binding protein 7a (64 aa).

Lysine 5 and lysine 7 each carry N6-methyllysine; partial.

The protein belongs to the 7 kDa DNA-binding/endoribonuclease P2 family. As to quaternary structure, homodimer. In terms of processing, lys-5 and Lys-7 were found to be 60% monomethylated. ADP-ribosylated by endogenous proteins in vitro.

In terms of biological role, can constrain negative DNA supercoils. May be involved in maintaining the integrity of the genome at high temperature. Has RNA endonuclease activity with a narrow substrate specificity; the cleavage products are 3'-phosphooligonucleotides. In Saccharolobus solfataricus (strain ATCC 35092 / DSM 1617 / JCM 11322 / P2) (Sulfolobus solfataricus), this protein is DNA-binding protein 7a (sso7a1).